The following is a 372-amino-acid chain: BTB/POZ and TAZ domain-containing protein 4 (372 aa).

Positions 14-37 are disordered; the sequence is SADSSSVPIPPPLPSKSDGLKKKL. Residues 60–128 enclose the BTB domain; that stretch reads ADVVIYTDNG…LYSSCYEKEE (69 aa). Residues 238 to 330 form a TAZ-type zinc finger; sequence RIYSQLYEAM…SDQCRVPLCR (93 aa). The caM-binding stretch occupies residues 341 to 364; the sequence is KKDESRWKLLVKNVLGSKKIGGSP.

As to quaternary structure, interacts with GTE11/BET10 through the BTB domain. Preferentially expressed in leaves, stems and flowers.

It is found in the cytoplasm. Its pathway is protein modification; protein ubiquitination. In terms of biological role, may act as a substrate-specific adapter of an E3 ubiquitin-protein ligase complex (CUL3-RBX1-BTB) which mediates the ubiquitination and subsequent proteasomal degradation of target proteins. This is BTB/POZ and TAZ domain-containing protein 4 (BT4) from Arabidopsis thaliana (Mouse-ear cress).